Here is a 420-residue protein sequence, read N- to C-terminus: Histidine--tRNA ligase (420 aa).

The protein belongs to the class-II aminoacyl-tRNA synthetase family. Homodimer.

The protein localises to the cytoplasm. The enzyme catalyses tRNA(His) + L-histidine + ATP = L-histidyl-tRNA(His) + AMP + diphosphate + H(+). The polypeptide is Histidine--tRNA ligase (Acholeplasma laidlawii (strain PG-8A)).